The chain runs to 340 residues: Putative transport protein AF_1800 (340 aa).

A run of 7 helical transmembrane segments spans residues Leu7–Leu27, Ser57–Ile77, Thr140–Met160, Leu193–Leu213, Gly225–Val245, Phe260–Phe280, and Leu290–Ile310.

It belongs to the autoinducer-2 exporter (AI-2E) (TC 2.A.86) family.

The protein localises to the cell membrane. The chain is Putative transport protein AF_1800 from Archaeoglobus fulgidus (strain ATCC 49558 / DSM 4304 / JCM 9628 / NBRC 100126 / VC-16).